Here is a 415-residue protein sequence, read N- to C-terminus: Serine hydroxymethyltransferase (415 aa).

Residues Leu117 and 121–123 (GHL) each bind (6S)-5,6,7,8-tetrahydrofolate. The residue at position 226 (Lys226) is an N6-(pyridoxal phosphate)lysine.

This sequence belongs to the SHMT family. In terms of assembly, homodimer. The cofactor is pyridoxal 5'-phosphate.

It is found in the cytoplasm. It carries out the reaction (6R)-5,10-methylene-5,6,7,8-tetrahydrofolate + glycine + H2O = (6S)-5,6,7,8-tetrahydrofolate + L-serine. It functions in the pathway one-carbon metabolism; tetrahydrofolate interconversion. Its pathway is amino-acid biosynthesis; glycine biosynthesis; glycine from L-serine: step 1/1. Its function is as follows. Catalyzes the reversible interconversion of serine and glycine with tetrahydrofolate (THF) serving as the one-carbon carrier. This reaction serves as the major source of one-carbon groups required for the biosynthesis of purines, thymidylate, methionine, and other important biomolecules. Also exhibits THF-independent aldolase activity toward beta-hydroxyamino acids, producing glycine and aldehydes, via a retro-aldol mechanism. This chain is Serine hydroxymethyltransferase, found in Dehalococcoides mccartyi (strain ATCC BAA-2100 / JCM 16839 / KCTC 5957 / BAV1).